The sequence spans 294 residues: MTAEEYAAAQAAITAGLATYVQRFASLFVGPALAVGEWLRLLQVLFPEIQRRYADAAALGRDFYDSQRALHHPELPRNERFRGELRWEWFVQNMEPARKEMSQADSPPSATSKLALAAVREVEMAARRQIIGAVKNDPAPQIVQGWARVATGRETCAWCLMLISRGAELNHKGNFAYSSAEAAGLNLDDETVIDLWNESGHDLEKFREETREDFEKWHAGCDCLVVPVFDVQNWPGRDAALRAQQLWIEASDEADDLIASGKARSKNKNTETLNALRRRLARGEITMSNYALAA.

The polypeptide is Gene 15 protein (15) (Mycobacterium phage L5 (Mycobacteriophage L5)).